Here is a 26-residue protein sequence, read N- to C-terminus: MKDVDQIFDALDCHILREYLILLFYD.

This is an uncharacterized protein from Escherichia coli (strain K12).